The primary structure comprises 293 residues: Exosome complex component RRP4 (293 aa).

Residues 79–159 (EVGDIVVGRI…SDGAVSLHTR (81 aa)) enclose the S1 motif domain. The residue at position 124 (Ser124) is a Phosphoserine.

It belongs to the RRP4 family. In terms of assembly, component of the RNA exosome core complex (Exo-9), composed of EXOSC1, EXOSC2, EXOSC3, EXOSC4, EXOSC5, EXOSC6, EXOSC7, EXOSC8 and EXOSC9; within the complex interacts with EXOSC4 and EXOSC7. The catalytically inactive RNA exosome core complex (Exo-9) associates with the catalytic subunit EXOSC10/RRP6. Exo-9 may associate with DIS3 to form the nucleolar exosome complex, or DIS3L to form the cytoplasmic exosome complex. Exo-9 is formed by a hexameric base ring consisting of the heterodimers EXOSC4-EXOSC9, EXOSC5-EXOSC8 and EXOSC6-EXOSC7, and a cap ring consisting of EXOSC1, EXOSC2 and EXOSC3. The RNA exosome complex associates with cofactors C1D/RRP47, MPHOSPH6/MPP6 and MTREX/MTR4. Interacts with GTPBP1. Interacts with ZFP36L1 (via N-terminus).

It localises to the cytoplasm. Its subcellular location is the nucleus. The protein resides in the nucleolus. Non-catalytic component of the RNA exosome complex which has 3'-&gt;5' exoribonuclease activity and participates in a multitude of cellular RNA processing and degradation events. In the nucleus, the RNA exosome complex is involved in proper maturation of stable RNA species such as rRNA, snRNA and snoRNA, in the elimination of RNA processing by-products and non-coding 'pervasive' transcripts, such as antisense RNA species and promoter-upstream transcripts (PROMPTs), and of mRNAs with processing defects, thereby limiting or excluding their export to the cytoplasm. The RNA exosome may be involved in Ig class switch recombination (CSR) and/or Ig variable region somatic hypermutation (SHM) by targeting AICDA deamination activity to transcribed dsDNA substrates. In the cytoplasm, the RNA exosome complex is involved in general mRNA turnover and specifically degrades inherently unstable mRNAs containing AU-rich elements (AREs) within their 3' untranslated regions, and in RNA surveillance pathways, preventing translation of aberrant mRNAs. It seems to be involved in degradation of histone mRNA. The catalytic inactive RNA exosome core complex of 9 subunits (Exo-9) is proposed to play a pivotal role in the binding and presentation of RNA for ribonucleolysis, and to serve as a scaffold for the association with catalytic subunits and accessory proteins or complexes. EXOSC2 as peripheral part of the Exo-9 complex stabilizes the hexameric ring of RNase PH-domain subunits through contacts with EXOSC4 and EXOSC7. This is Exosome complex component RRP4 (EXOSC2) from Bos taurus (Bovine).